Here is a 325-residue protein sequence, read N- to C-terminus: 6-hydroxymellein 5-farnesyltransferase cdmH (325 aa).

The next 5 helical transmembrane spans lie at Ala60 to Gly80, Ala113 to Gly133, Trp138 to Ile158, Leu169 to Cys189, and Ile192 to Tyr212. N-linked (GlcNAc...) asparagine glycosylation is present at Asn214. The next 3 helical transmembrane spans lie at Ala243–Phe263, Trp267–Phe287, and Gly295–Leu315.

The protein belongs to the UbiA prenyltransferase family. The cofactor is Mg(2+).

The protein localises to the membrane. The enzyme catalyses 6-hydroxymellein + (2E,6E)-farnesyl diphosphate = verruculide C + diphosphate. It participates in secondary metabolite biosynthesis; terpenoid biosynthesis. Functionally, 6-hydroxymellein 5-farnesyltransferase; part of the gene cluster that mediates the biosynthesis of chrodrimanin B, a meroterpenoid that acts as a potent blocker of insect GABA-gated chloride channels. The first step of the pathway is the biosynthesis of 6-hydroxymellein by the polyketide synthase cdmE. The prenyltransferase cdmH acts as a 6-hydroxymellein 5-farnesyltransferase and produces the hydrophobic metabolite verruculide C. The FAD-dependent monooxygenase cdmI further converts verruculide C into verruculide B. The terpene cyclase cdmG then produced the pentacyclic molecule 3-hydroxypentacecilide A, the backbone structure of chrodrimanin B, via folding the farnesyl moiety of the substrate into the chair-boat conformation. The short-chain dehydrogenase/reductase cdmF functions as the 3-OH dehydrogenase that oxidizes the C-3 hydroxyl group of 3-hydroxypentacecilide A and produces chrodrimanin C, the dehydrogenated product of 3-hydroxypentacecilide A. The cytochrome P450 monooxygenase cdmJ then accepts both 3-hydroxypentacecilide A and chrodrimanin C and functions as a C-7-beta-hydroxylase to produce respectively chrodrimanin H and chrodrimanin F. The dioxygenase cdmA accepts chrodrimanin H to afford chrodrimanin E, which is further transformed to chrodrimanin A by the dioxygenase cdmD. CdmA can also accept chrodrimanin C as substrate to convert it into verruculide A, which is further converted into chrodrimanin T by cdmD. The last step of the biosynthesis is proposed to be performed by the acetyltransferase cdmC which acetylates chrodrimanin A to yield chrodrimanin B. The pathway may also lead to the production of additional shunt products, including chrodrimanins T and U. The protein is 6-hydroxymellein 5-farnesyltransferase cdmH of Talaromyces verruculosus (Penicillium verruculosum).